The primary structure comprises 701 residues: 2-isopropylmalate synthase (701 aa).

The tract at residues 1–40 (MTTSESPDAYTESFGAHTIVKPAGPPRVGQPSWNPQRASS) is disordered. Over residues 31–40 (PSWNPQRASS) the composition is skewed to polar residues. The Pyruvate carboxyltransferase domain maps to 72-346 (PLWCAVDLRD…DPQIDFSNID (275 aa)). The Mg(2+) site is built by D81, H285, H287, and N321. The segment at 491–701 (PVRPLERIRQ…VVSAVNRAAR (211 aa)) is regulatory domain. Residues 575–593 (VTIASPAQPGEAGRHASDP) form a VNTR1 repeat. Positions 581–670 (AQPGEAGRHA…EAGRHASDPV (90 aa)) are disordered. A VNTR2 repeat occupies 594–612 (VTIASPAQPGEAGRHASDP). The stretch at 613–631 (VTIASPAQPGEAGRHASDP) is one VNTR3 repeat. A VNTR4 repeat occupies 632–650 (VTIASPAQPGEAGRHASDP). One copy of the VNTR5 repeat lies at 651-669 (VTIASPAQPGEAGRHASDP).

The protein belongs to the alpha-IPM synthase/homocitrate synthase family. LeuA type 2 subfamily. In terms of assembly, homodimer. The cofactor is Mg(2+).

Its subcellular location is the cytoplasm. It catalyses the reaction 3-methyl-2-oxobutanoate + acetyl-CoA + H2O = (2S)-2-isopropylmalate + CoA + H(+). The protein operates within amino-acid biosynthesis; L-leucine biosynthesis; L-leucine from 3-methyl-2-oxobutanoate: step 1/4. Its function is as follows. Catalyzes the condensation of the acetyl group of acetyl-CoA with 3-methyl-2-oxobutanoate (2-ketoisovalerate) to form 3-carboxy-3-hydroxy-4-methylpentanoate (2-isopropylmalate). The sequence is that of 2-isopropylmalate synthase from Mycobacterium bovis (strain ATCC BAA-935 / AF2122/97).